Reading from the N-terminus, the 239-residue chain is MRPSGRKTDQMRKVSFERNFSKHAEGSCLVRFGDTHVLCTASLEDKVPAWLRNGGKGWITAEYGMLPRATGERMRREASTGKQSGRTQEIQRLIGRSLRAVVDLPALGERQISIDCDVIQADGGTRTASITGAWIALHDCLKWMEARNMIKVERVLKDHVAAISCGIFANQAVVDLDYLEDSAAETDANFVMTGSGGLVEIQGTAEGKPFSEEEFASLMQLAKDGIAELVALQKQAVAG.

Phosphate contacts are provided by residues Arg-86 and 124 to 126 (GTR).

This sequence belongs to the RNase PH family. Homohexameric ring arranged as a trimer of dimers.

It catalyses the reaction tRNA(n+1) + phosphate = tRNA(n) + a ribonucleoside 5'-diphosphate. In terms of biological role, phosphorolytic 3'-5' exoribonuclease that plays an important role in tRNA 3'-end maturation. Removes nucleotide residues following the 3'-CCA terminus of tRNAs; can also add nucleotides to the ends of RNA molecules by using nucleoside diphosphates as substrates, but this may not be physiologically important. Probably plays a role in initiation of 16S rRNA degradation (leading to ribosome degradation) during starvation. This is Ribonuclease PH from Sinorhizobium fredii (strain NBRC 101917 / NGR234).